Reading from the N-terminus, the 1106-residue chain is Carbamoyl phosphate synthase large chain (1106 aa).

The carboxyphosphate synthetic domain stretch occupies residues 1-402 (MPRRQDLNSV…ALQKAMRSLE (402 aa)). Positions 129, 169, 175, 176, 208, 210, 215, 241, 242, 243, 285, and 299 each coordinate ATP. Residues 133–328 (KGVVERCGAE…IAKIATKLSL (196 aa)) enclose the ATP-grasp 1 domain. Positions 285, 299, and 301 each coordinate Mg(2+). Mn(2+) contacts are provided by Q285, E299, and N301. Positions 403–550 (QKGSAFSFAR…YHYSSYDRET (148 aa)) are oligomerization domain. The segment at 551–953 (EVAPHEKPSV…AFAKAQAAAG (403 aa)) is carbamoyl phosphate synthetic domain. An ATP-grasp 2 domain is found at 681-872 (ARVLTEAGLR…MAKAAALIGT (192 aa)). The ATP site is built by R717, K756, L758, E763, G788, I789, H790, S791, Q831, and E843. Residues Q831, E843, and N845 each contribute to the Mg(2+) site. Residues Q831, E843, and N845 each coordinate Mn(2+). Positions 954-1106 (GPLPTSGSLF…ERAAQEASRD (153 aa)) constitute an MGS-like domain. Residues 954-1106 (GPLPTSGSLF…ERAAQEASRD (153 aa)) form an allosteric domain region.

It belongs to the CarB family. Composed of two chains; the small (or glutamine) chain promotes the hydrolysis of glutamine to ammonia, which is used by the large (or ammonia) chain to synthesize carbamoyl phosphate. Tetramer of heterodimers (alpha,beta)4. Mg(2+) serves as cofactor. Mn(2+) is required as a cofactor.

It carries out the reaction hydrogencarbonate + L-glutamine + 2 ATP + H2O = carbamoyl phosphate + L-glutamate + 2 ADP + phosphate + 2 H(+). The enzyme catalyses hydrogencarbonate + NH4(+) + 2 ATP = carbamoyl phosphate + 2 ADP + phosphate + 2 H(+). Its pathway is amino-acid biosynthesis; L-arginine biosynthesis; carbamoyl phosphate from bicarbonate: step 1/1. It participates in pyrimidine metabolism; UMP biosynthesis via de novo pathway; (S)-dihydroorotate from bicarbonate: step 1/3. Its function is as follows. Large subunit of the glutamine-dependent carbamoyl phosphate synthetase (CPSase). CPSase catalyzes the formation of carbamoyl phosphate from the ammonia moiety of glutamine, carbonate, and phosphate donated by ATP, constituting the first step of 2 biosynthetic pathways, one leading to arginine and/or urea and the other to pyrimidine nucleotides. The large subunit (synthetase) binds the substrates ammonia (free or transferred from glutamine from the small subunit), hydrogencarbonate and ATP and carries out an ATP-coupled ligase reaction, activating hydrogencarbonate by forming carboxy phosphate which reacts with ammonia to form carbamoyl phosphate. This is Carbamoyl phosphate synthase large chain from Kocuria rhizophila (strain ATCC 9341 / DSM 348 / NBRC 103217 / DC2201).